The following is a 724-amino-acid chain: MEHNKAGSSGQCPVMHGGLTSASMSNMDWWPKALNLDILHQHDSKTNPLGADFNYREELKKLDVEALKRDLKALMTNSQEWWPADWGHYGGLMIRMAWHSAGTYRIADGRGGGGTGNQRFAPLNSWPDNANLDKARRLLWPIKQKYGNKISWADLMILAGNMAYESMGLKTFGFAFGREDIWHPEKDIYWGSEKEWLAKSGGENSRYSGQRDLENPLAAVMMGLIYVNPEGVDGNPDPLKTAQDMRVTFARMAMNDEETVALTAGGHTVGKAHGNGKASNLGPDPEGAELHEQGLGWNNHTSRGIGRNTVTSGIEGAWTTHPTRWDNEYFYLLLSYEWQLTKSPAGAWQWEPVNIKEEDKPVDVEDPSIRYNPMMTDADMALKIDPEYRKISERFYKDPAYFSEVFARAWFKLTHRDMGPKARYFGPDVPAEDLIWQDPVPAGRKDYDVNAVKAKIAASGLSISEMVSTAWDSARTFRGSDKRGGANGARIRLAPQKDWEGNEPARLGKVLAVLEKIAAESGISIADTIVLAGNVGIEQAAKAAGVNVTVPFAPGRGDATIEQTDVESFEVLEPLADGFRNWQKKHYVVTPEEMLLDKAQLLRLTAPEMTVLIGGMRVLGTNYGGSQHGVFTDRVGALTNDFFVNLTDMSYTWKPTGRNSYEIVERKSGKVKWTATRVDLVFGSNSILRAYAEVYAQDDNKEKFVKDFVAAWTKVMNADRFDLV.

A cross-link (tryptophyl-tyrosyl-methioninium (Trp-Tyr) (with M-252)) is located at residues 98 to 226 (WHSAGTYRIA…LAAVMMGLIY (129 aa)). The active-site Proton acceptor is the His-99. The segment at residues 226 to 252 (YVNPEGVDGNPDPLKTAQDMRVTFARM) is a cross-link (tryptophyl-tyrosyl-methioninium (Tyr-Met) (with W-98)). Position 267 (His-267) interacts with heme b.

This sequence belongs to the peroxidase family. Peroxidase/catalase subfamily. Homodimer or homotetramer. The cofactor is heme b. Formation of the three residue Trp-Tyr-Met cross-link is important for the catalase, but not the peroxidase activity of the enzyme.

It carries out the reaction H2O2 + AH2 = A + 2 H2O. The catalysed reaction is 2 H2O2 = O2 + 2 H2O. Its function is as follows. Bifunctional enzyme with both catalase and broad-spectrum peroxidase activity. The protein is Catalase-peroxidase of Vibrio cholerae serotype O1 (strain ATCC 39315 / El Tor Inaba N16961).